The chain runs to 156 residues: Sperm acrosome-associated protein 5 (156 aa).

Positions 1–18 are cleaved as a signal peptide; that stretch reads MQVSGTIVVILMAANVEA. The 129-residue stretch at 19 to 147 folds into the C-type lysozyme domain; sequence KIYERCDLAK…SEWLRGCHMN (129 aa). 4 disulfide bridges follow: C24–C144, C48–C132, C82–C97, and C93–C111. E53 is an active-site residue.

The protein belongs to the glycosyl hydrolase 22 family.

It is found in the secreted. It catalyses the reaction Hydrolysis of (1-&gt;4)-beta-linkages between N-acetylmuramic acid and N-acetyl-D-glucosamine residues in a peptidoglycan and between N-acetyl-D-glucosamine residues in chitodextrins.. In Bos taurus (Bovine), this protein is Sperm acrosome-associated protein 5 (SPACA5).